The sequence spans 185 residues: Avirulence protein ATR39-1 (185 aa).

The signal sequence occupies residues 1-20 (MVKCTPLLALTVIVSAGSDA). A RxLR-dEER motif is present at residues 49–66 (RVLRASDVPDEVAAGESR).

This sequence belongs to the RxLR effector family.

It is found in the secreted. It localises to the host cell. Functionally, secreted effector that acts as an elicitor of hypersensitive response (HR) specifically on plants carrying defense protein RPP39. The allele ATR39-1 is recognized by RPP39, whereas the ATR39-2 allele is not recognized. This is Avirulence protein ATR39-1 from Hyaloperonospora arabidopsidis (strain Emoy2) (Downy mildew agent).